Reading from the N-terminus, the 185-residue chain is Ion-translocating oxidoreductase complex subunit B (185 aa).

The tract at residues 1-26 is hydrophobic; it reads MNHILLIILIFAALALIFGLLLGFAA. A 4Fe-4S domain is found at 32 to 90; that stretch reads ESDPIVDQLDALLPQTQCGQCGYPGCRPYAEAIANGDSINKCVPGGAQTIQNIADLMGV. [4Fe-4S] cluster-binding residues include Cys49, Cys52, Cys57, Cys73, Cys115, Cys118, Cys121, Cys125, Cys145, Cys148, Cys151, and Cys155. 2 4Fe-4S ferredoxin-type domains span residues 106–135 and 136–165; these read RVAF…GAPK and LMHT…MIEL.

This sequence belongs to the 4Fe4S bacterial-type ferredoxin family. RnfB subfamily. In terms of assembly, the complex is composed of six subunits: RnfA, RnfB, RnfC, RnfD, RnfE and RnfG. Requires [4Fe-4S] cluster as cofactor.

The protein localises to the cell inner membrane. In terms of biological role, part of a membrane-bound complex that couples electron transfer with translocation of ions across the membrane. This chain is Ion-translocating oxidoreductase complex subunit B, found in Tolumonas auensis (strain DSM 9187 / NBRC 110442 / TA 4).